We begin with the raw amino-acid sequence, 207 residues long: Large ribosomal subunit protein uL4 (207 aa).

The segment at 48-75 (THAVKNRSAVSGGGRKPWKQKGTGRARA) is disordered.

The protein belongs to the universal ribosomal protein uL4 family. As to quaternary structure, part of the 50S ribosomal subunit.

Functionally, one of the primary rRNA binding proteins, this protein initially binds near the 5'-end of the 23S rRNA. It is important during the early stages of 50S assembly. It makes multiple contacts with different domains of the 23S rRNA in the assembled 50S subunit and ribosome. In terms of biological role, forms part of the polypeptide exit tunnel. This Leuconostoc citreum (strain KM20) protein is Large ribosomal subunit protein uL4.